The primary structure comprises 80 residues: Putative DNA-directed RNA polymerase subunit omega (80 aa).

The protein belongs to the RNA polymerase subunit omega family.

It localises to the plastid. The protein localises to the chloroplast. It carries out the reaction RNA(n) + a ribonucleoside 5'-triphosphate = RNA(n+1) + diphosphate. Its function is as follows. May be involved in RNA polymerase activity. The chain is Putative DNA-directed RNA polymerase subunit omega from Gracilaria tenuistipitata var. liui (Red alga).